Consider the following 599-residue polypeptide: Subtilisin-like protease 1 (599 aa).

Residues 1–20 (MRTVFIYACIISLVLRTIPA) form the signal peptide. Residues 21 to 195 (HNDLMSKEKE…VESDELVGAD (175 aa)) constitute a propeptide, inhibition peptide. A glycan (N-linked (GlcNAc...) asparagine) is linked at Asn57. Residues 74–101 (EDAPKEELNKIEMEKKKAEEEAKNSKKK) are a coiled coil. Ca(2+)-binding residues include Asn123, Thr126, Pro128, and Gly183. N-linked (GlcNAc...) asparagine glycosylation is present at Asn227. Asp251 contributes to the Ca(2+) binding site. Residues 257–574 (QWGLDLARLD…GGYIDILNAV (318 aa)) enclose the Peptidase S8 domain. Cystine bridges form between Cys283-Cys393 and Cys372-Cys389. Asp286 (charge relay system) is an active-site residue. Residues Asp295, Glu306, Asp314, Asp315, Asp316, Asn318, Ile320, Asp322, and Asp323 each contribute to the Ca(2+) site. N-linked (GlcNAc...) asparagine glycosylation occurs at Asn331. Residue His342 is the Charge relay system of the active site. Ile353 provides a ligand contact to Ca(2+). The N-linked (GlcNAc...) asparagine glycan is linked to Asn355. The Ca(2+) site is built by Asn356, Ile358, and Val360. N-linked (GlcNAc...) asparagine glycosylation is found at Asn402 and Asn434. Residues Cys435 and Cys448 are joined by a disulfide bond. Catalysis depends on Ser519, which acts as the Charge relay system.

The protein belongs to the peptidase S8 family. Post-translationally, the N-terminal prodomain is cleaved.

It is found in the secreted. The protein localises to the parasitophorous vacuole lumen. Its subcellular location is the cytoplasmic vesicle. The protein resides in the secretory vesicle. It catalyses the reaction Hydrolysis of proteins with broad specificity for peptide bonds, and a preference for a large uncharged residue in P1. Hydrolyzes peptide amides.. Its function is as follows. Mediates the proteolytic maturation of serine protease SERA3. Mediates the proteolytic maturation of MSP1, and thereby may prime the parasite cell surface for invasion of fresh erythrocytes. Required for completion of the parasite pre-erythrocytic stages. Required for hepatic schizont development and merozoite formation. Required for the egress of the hepatic merozoites from the parasitophorous vacuole. Required for parasite infectivity during blood stages. Required for male gamete egress. This chain is Subtilisin-like protease 1, found in Plasmodium berghei (strain Anka).